The following is a 100-amino-acid chain: MAKKSMLMRESKRAKLVEKYRQRRNELKQLIKSSDDFQVIMESQAKLAKLPVNSNPVRYVTRCKQCGRPHAVYRKFNLCRICLRQQLMVGNIPGGRKSSW.

4 residues coordinate Zn(2+): Cys-63, Cys-66, Cys-79, and Cys-82.

Belongs to the universal ribosomal protein uS14 family. As to quaternary structure, part of the 30S ribosomal subunit. Contacts proteins S3 and S10. Zn(2+) serves as cofactor.

Its function is as follows. Binds 16S rRNA, required for the assembly of 30S particles and may also be responsible for determining the conformation of the 16S rRNA at the A site. The polypeptide is Small ribosomal subunit protein uS14 (rpsN) (Legionella pneumophila (strain Paris)).